The sequence spans 317 residues: tRNA pseudouridine synthase B (317 aa).

D47 (nucleophile) is an active-site residue.

The protein belongs to the pseudouridine synthase TruB family. Type 1 subfamily.

The enzyme catalyses uridine(55) in tRNA = pseudouridine(55) in tRNA. In terms of biological role, responsible for synthesis of pseudouridine from uracil-55 in the psi GC loop of transfer RNAs. The chain is tRNA pseudouridine synthase B from Shewanella sp. (strain MR-7).